We begin with the raw amino-acid sequence, 293 residues long: Nucleotide-binding protein cauri_1197 (293 aa).

Residue 16–23 (GMSGGGLT) coordinates ATP. GTP is bound at residue 67 to 70 (DVRS).

Belongs to the RapZ-like family.

Displays ATPase and GTPase activities. The sequence is that of Nucleotide-binding protein cauri_1197 from Corynebacterium aurimucosum (strain ATCC 700975 / DSM 44827 / CIP 107346 / CN-1) (Corynebacterium nigricans).